Reading from the N-terminus, the 493-residue chain is Vinyl phenol reductase (493 aa).

Residues alanine 19, glutamate 38, serine 46, threonine 50, glycine 52, alanine 156, aspartate 224, asparagine 448, and valine 467 each contribute to the FAD site.

It belongs to the FAD-dependent oxidoreductase 2 family. FRD/SDH subfamily. It depends on FAD as a cofactor.

It carries out the reaction 4-vinylphenol + NADH + H(+) = 4-ethylphenol + NAD(+). The catalysed reaction is 3,4-dihydroxystyrene + NADH + H(+) = 4-ethylcatechol + NAD(+). The enzyme catalyses 2-methoxy-4-vinylphenol + NADH + H(+) = 4-ethyl-2-methoxyphenol + NAD(+). Functionally, involved in the production of ethylphenols during the degradation of hydroxycinnamic acids. Catalyzes the reduction of vinylphenols (4-vinylphenol (4-hydroxystyrene), 4-vinylcatechol (3,4-dihydroxystyrene), and 4-vinylguaiacol (2-methoxy-4-vinylphenol)) to their corresponding ethylphenols (4-ethylphenol, 4-ethylcatechol, and 4-ethylguaiacol, respectively) in the presence of NADH. These compounds are considered the most important flavor components of fermented soy sauce, and, on the other hand, are considered off flavor and responsible for sensorial wine and cider alteration. The 4-ethylphenol produced by the gut bacteria L.plantarum strain WCFS1 can get subsequent sulfation to 4-ethylphenyl sulfate (4EPS) by host sulfotransferase (SULT1A1); 4EPS can enter the brain and seems to alter brain activity. Therefore, this enzyme likely plays a role in gut microbiota-host metabolic interactions. The protein is Vinyl phenol reductase of Lactiplantibacillus plantarum (strain ATCC BAA-793 / NCIMB 8826 / WCFS1) (Lactobacillus plantarum).